The chain runs to 444 residues: Chromosome partition protein MukF (444 aa).

The leucine-zipper stretch occupies residues 211–239 (LDETSGNLRELQDTLNAAGDKLQAQLLRI).

This sequence belongs to the MukF family. In terms of assembly, interacts, and probably forms a ternary complex, with MukE and MukB via its C-terminal region. The complex formation is stimulated by calcium or magnesium. It is required for an interaction between MukE and MukB.

It is found in the cytoplasm. It localises to the nucleoid. Involved in chromosome condensation, segregation and cell cycle progression. May participate in facilitating chromosome segregation by condensation DNA from both sides of a centrally located replisome during cell division. Not required for mini-F plasmid partitioning. Probably acts via its interaction with MukB and MukE. Overexpression results in anucleate cells. It has a calcium binding activity. This Actinobacillus succinogenes (strain ATCC 55618 / DSM 22257 / CCUG 43843 / 130Z) protein is Chromosome partition protein MukF.